A 377-amino-acid chain; its full sequence is Queuine tRNA-ribosyltransferase (377 aa).

The active-site Proton acceptor is D89. Substrate contacts are provided by residues D89–F93, D143, Q188, and G215. The RNA binding stretch occupies residues G246–D252. D265 functions as the Nucleophile in the catalytic mechanism. Residues T270–R274 are RNA binding; important for wobble base 34 recognition. Residues C303, C305, C308, and H334 each coordinate Zn(2+).

It belongs to the queuine tRNA-ribosyltransferase family. As to quaternary structure, homodimer. Within each dimer, one monomer is responsible for RNA recognition and catalysis, while the other monomer binds to the replacement base PreQ1. Requires Zn(2+) as cofactor.

The enzyme catalyses 7-aminomethyl-7-carbaguanine + guanosine(34) in tRNA = 7-aminomethyl-7-carbaguanosine(34) in tRNA + guanine. The protein operates within tRNA modification; tRNA-queuosine biosynthesis. Functionally, catalyzes the base-exchange of a guanine (G) residue with the queuine precursor 7-aminomethyl-7-deazaguanine (PreQ1) at position 34 (anticodon wobble position) in tRNAs with GU(N) anticodons (tRNA-Asp, -Asn, -His and -Tyr). Catalysis occurs through a double-displacement mechanism. The nucleophile active site attacks the C1' of nucleotide 34 to detach the guanine base from the RNA, forming a covalent enzyme-RNA intermediate. The proton acceptor active site deprotonates the incoming PreQ1, allowing a nucleophilic attack on the C1' of the ribose to form the product. After dissociation, two additional enzymatic reactions on the tRNA convert PreQ1 to queuine (Q), resulting in the hypermodified nucleoside queuosine (7-(((4,5-cis-dihydroxy-2-cyclopenten-1-yl)amino)methyl)-7-deazaguanosine). This is Queuine tRNA-ribosyltransferase from Acinetobacter baumannii (strain AB307-0294).